The following is a 432-amino-acid chain: Adenosylhomocysteinase (432 aa).

The residue at position 2 (Ser2) is an N-acetylserine. Residues Thr57, Asp131, and Glu156 each coordinate substrate. The residue at position 183 (Ser183) is a Phosphoserine. An NAD binding region spans residues 183–350 (SVTKSKFDNL…EGRLVNLGCA (168 aa)). 2 residues coordinate substrate: Lys186 and Asp190. An N6-(2-hydroxyisobutyryl)lysine modification is found at Lys186. Tyr193 is modified (phosphotyrosine).

This sequence belongs to the adenosylhomocysteinase family. In terms of assembly, homotetramer. Interaction with AHCYL1. It depends on NAD(+) as a cofactor.

The protein localises to the cytoplasm. It localises to the melanosome. Its subcellular location is the nucleus. The protein resides in the endoplasmic reticulum. It carries out the reaction S-adenosyl-L-homocysteine + H2O = L-homocysteine + adenosine. It participates in amino-acid biosynthesis; L-homocysteine biosynthesis; L-homocysteine from S-adenosyl-L-homocysteine: step 1/1. In terms of biological role, catalyzes the hydrolysis of S-adenosyl-L-homocysteine to form adenosine and homocysteine. Binds copper ions. The protein is Adenosylhomocysteinase (AHCY) of Sus scrofa (Pig).